The primary structure comprises 286 residues: Ribose-phosphate pyrophosphokinase (286 aa).

ATP-binding positions include D34–E36 and R91–Q92. Positions 124 and 161 each coordinate Mg(2+). K184 is a catalytic residue. Residues R186, D210, and S214–T218 contribute to the D-ribose 5-phosphate site.

This sequence belongs to the ribose-phosphate pyrophosphokinase family. Class III (archaeal) subfamily. Mg(2+) is required as a cofactor.

It is found in the cytoplasm. It catalyses the reaction D-ribose 5-phosphate + ATP = 5-phospho-alpha-D-ribose 1-diphosphate + AMP + H(+). It participates in metabolic intermediate biosynthesis; 5-phospho-alpha-D-ribose 1-diphosphate biosynthesis; 5-phospho-alpha-D-ribose 1-diphosphate from D-ribose 5-phosphate (route I): step 1/1. Involved in the biosynthesis of the central metabolite phospho-alpha-D-ribosyl-1-pyrophosphate (PRPP) via the transfer of pyrophosphoryl group from ATP to 1-hydroxyl of ribose-5-phosphate (Rib-5-P). This is Ribose-phosphate pyrophosphokinase from Thermoplasma acidophilum (strain ATCC 25905 / DSM 1728 / JCM 9062 / NBRC 15155 / AMRC-C165).